A 705-amino-acid chain; its full sequence is Dolichyl-diphosphooligosaccharide--protein glycosyltransferase subunit STT3A (705 aa).

Residues 1 to 17 are Cytoplasmic-facing; sequence MTKLGFLRLSYEKQDTL. The chain crosses the membrane as a helical span at residues 18-38; that stretch reads LKLLILSMAAVLSFSTRLFAV. Topologically, residues 39 to 119 are lumenal; that stretch reads LRFESVIHEF…IDIRNVCVFL (81 aa). Residues 47–49 carry the DXD motif 1 motif; sequence EFD. Aspartate 49 is a binding site for Mn(2+). The chain crosses the membrane as a helical span at residues 120-138; the sequence is APLFSSFTTIVTYHLTKEL. The Cytoplasmic segment spans residues 139–140; the sequence is KD. The helical transmembrane segment at 141-158 threads the bilayer; that stretch reads AGAGLLAAAMIAVVPGYI. The Lumenal segment spans residues 159-169; that stretch reads SRSVAGSYDNE. Mn(2+)-binding residues include aspartate 167 and glutamate 169. The DXD motif 2 motif lies at 167–169; it reads DNE. The chain crosses the membrane as a helical span at residues 170–189; sequence GIAIFCMLLTYYMWIKAVKT. At 190–191 the chain is on the cytoplasmic side; it reads GS. Residues 192–206 traverse the membrane as a helical segment; sequence IYWAAKCALAYFYMV. Residues 207–211 are Lumenal-facing; it reads SSWGG. The helical transmembrane segment at 212 to 228 threads the bilayer; it reads YVFLINLIPLHVLVLML. Topologically, residues 229 to 233 are cytoplasmic; sequence TGRFS. Residues 234–259 form a helical membrane-spanning segment; it reads HRIYVAYCTVYCLGTILSMQISFVGF. Over 260 to 267 the chain is Lumenal; sequence QPVLSSEH. The chain crosses the membrane as a helical span at residues 268–287; the sequence is MAAFGVFGLCQIHAFVDYLR. The Cytoplasmic segment spans residues 288–300; the sequence is SKLNPQQFEVLFR. Residues 301–321 traverse the membrane as a helical segment; it reads SVISLVGFVLLTIGALLMLTG. The Lumenal portion of the chain corresponds to 322-356; that stretch reads KISPWTGRFYSLLDPSYAKNNIPIIASVSEHQPTT. The SVSE motif motif lies at 348–351; the sequence is SVSE. A helical transmembrane segment spans residues 357–379; sequence WSSYYFDLQLLVFMFPVGLYYCF. Residues 380–385 are Cytoplasmic-facing; that stretch reads SNLSDA. The chain crosses the membrane as a helical span at residues 386-402; sequence RIFIIMYGVTSMYFSAV. The Lumenal segment spans residues 403–406; sequence MVRL. Residue arginine 405 participates in dolichyl diphosphooligosaccharide binding. Residues 407-428 traverse the membrane as a helical segment; the sequence is MLVLAPVMCILSGIGVSQVLST. Over 429-453 the chain is Cytoplasmic; sequence YMKNLDISRQDKKSKKQQDSTYPIK. Residues 454–473 traverse the membrane as a helical segment; sequence NEVASGMILVMAFFLITYTF. The Lumenal segment spans residues 474–705; sequence HSTWVTSEAY…DLDNRGLSRT (232 aa). Residues 525–527 are interacts with target acceptor peptide in protein substrate; it reads WWD. The WWDYG motif motif lies at 525 to 529; that stretch reads WWDYG. Tyrosine 530 contacts dolichyl diphosphooligosaccharide. 2 N-linked (GlcNAc...) asparagine glycosylation sites follow: asparagine 537 and asparagine 544. Asparagine 548 carries an N-linked (GlcNAc...) (high mannose) asparagine glycan. The short motif at 592–599 is the DK motif element; that stretch reads DINKFLWM.

The protein belongs to the STT3 family. As to quaternary structure, component of the oligosaccharyltransferase (OST) complex. There are 2 OST complexes, OST-A and OST-B, which contain STT3A or STT3B as catalytic subunit, respectively. OST-A and OST-B contain common core subunits RPN1, RPN2, OST48, OST4, DAD1 and TMEM258, and OST-A contains DC2/OSTC and KRTCAP2/KCP2 specific accessory subunits. OST-A complex assembly occurs through the formation of 3 subcomplexes. Subcomplex 1 contains RPN1 and TMEM258, subcomplex 2 contains the OST-A-specific subunits STT3A, DC2/OSTC, and KCP2 as well as the core subunit OST4, and subcomplex 3 contains RPN2, DAD1, and OST48. The OST-A complex can form stable complexes with the Sec61 complex or with both the Sec61 and TRAP complexes. It depends on Mg(2+) as a cofactor. Mn(2+) serves as cofactor.

Its subcellular location is the endoplasmic reticulum membrane. It carries out the reaction a di-trans,poly-cis-dolichyl diphosphooligosaccharide + L-asparaginyl-[protein] = N(4)-(oligosaccharide-(1-&gt;4)-N-acetyl-beta-D-glucosaminyl-(1-&gt;4)-N-acetyl-beta-D-glucosaminyl)-L-asparaginyl-[protein] + a di-trans,poly-cis-dolichyl diphosphate + H(+). Its pathway is protein modification; protein glycosylation. Functionally, catalytic subunit of the oligosaccharyl transferase (OST) complex that catalyzes the initial transfer of a defined glycan (Glc(3)Man(9)GlcNAc(2) in eukaryotes) from the lipid carrier dolichol-pyrophosphate to an asparagine residue within an Asn-X-Ser/Thr consensus motif in nascent polypeptide chains, the first step in protein N-glycosylation. N-glycosylation occurs cotranslationally and the complex associates with the Sec61 complex at the channel-forming translocon complex that mediates protein translocation across the endoplasmic reticulum (ER). All subunits are required for a maximal enzyme activity. This subunit contains the active site and the acceptor peptide and donor lipid-linked oligosaccharide (LLO) binding pockets. STT3A is present in the majority of OST complexes and mediates cotranslational N-glycosylation of most sites on target proteins, while STT3B-containing complexes are required for efficient post-translational glycosylation and mediate glycosylation of sites that have been skipped by STT3A. STT3A-containing OST-A complex is also required to prevent hyperglycosylation of some target proteins by preventing glycosylation of facultative sites before folding of target proteins is completed. This Bos taurus (Bovine) protein is Dolichyl-diphosphooligosaccharide--protein glycosyltransferase subunit STT3A.